The sequence spans 901 residues: Protein translocase subunit SecA (901 aa).

Residues Gln87, 105–109 (GEGKT), and Asp512 each bind ATP. The disordered stretch occupies residues 852–901 (AQMQQLSHQSDDEAAAQDLAAQTGERKVGRNDPCPCGSGKKYKQCHGRLS). Residues Cys885, Cys887, Cys896, and His897 each contribute to the Zn(2+) site. Over residues 891-901 (KKYKQCHGRLS) the composition is skewed to basic residues.

This sequence belongs to the SecA family. Monomer and homodimer. Part of the essential Sec protein translocation apparatus which comprises SecA, SecYEG and auxiliary proteins SecDF-YajC and YidC. The cofactor is Zn(2+).

The protein localises to the cell inner membrane. It localises to the cytoplasm. It catalyses the reaction ATP + H2O + cellular proteinSide 1 = ADP + phosphate + cellular proteinSide 2.. Its function is as follows. Part of the Sec protein translocase complex. Interacts with the SecYEG preprotein conducting channel. Has a central role in coupling the hydrolysis of ATP to the transfer of proteins into and across the cell membrane, serving both as a receptor for the preprotein-SecB complex and as an ATP-driven molecular motor driving the stepwise translocation of polypeptide chains across the membrane. This is Protein translocase subunit SecA from Klebsiella pneumoniae subsp. pneumoniae (strain ATCC 700721 / MGH 78578).